The following is a 121-amino-acid chain: Movement protein TGBp3 (121 aa).

The disordered stretch occupies residues 1 to 40 (MHYPTEADTSTGPNPSATSAPVRPRHVTPSLSPSSSSSPS). Residues 1–43 (MHYPTEADTSTGPNPSATSAPVRPRHVTPSLSPSSSSSPSPDS) are Lumenal-facing. A compositionally biased stretch (polar residues) spans 7–19 (ADTSTGPNPSATS). A compositionally biased stretch (low complexity) spans 29–40 (PSLSPSSSSSPS). Residues 44–64 (FYYFLAAAVILTAALAAALLT) form a helical membrane-spanning segment. Residues 65 to 121 (PNPGCTIVITGHTTIIQGSCPIPPQLVLAAHPRGLSLEQYLKFTNTLPDGSQHRSHR) lie on the Cytoplasmic side of the membrane.

It belongs to the Tymovirales TGBp3 protein family.

It localises to the host endoplasmic reticulum membrane. Functionally, plays a role in viral cell-to-cell propagation, by facilitating genome transport to neighboring plant cells through plasmosdesmata. May induce the formation of granular vesicles derived from the Endoplasmic reticulum, which align on actin filaments. This Plantago asiatica (P1AMV) protein is Movement protein TGBp3.